The chain runs to 159 residues: F1845 fimbrial protein (159 aa).

The signal sequence occupies residues 1–21 (MKKLAIMAAASMIFTVGSAQA).

Belongs to the Dr-adhesin family.

Its subcellular location is the fimbrium. Functionally, hemagglutinins of uropathogenic E.coli mediate adherence to the upper urinary tract. These adhesins bind to the Dr blood group antigen and also agglutinate human erythrocytes in the presence of D-mannose (mannose-resistant hemagglutination (MRHA)). C1845 is a strain responsible for diarrheal disease. The polypeptide is F1845 fimbrial protein (daaE) (Escherichia coli).